The sequence spans 1408 residues: DNA-directed RNA polymerase subunit beta'' (1408 aa).

This sequence belongs to the RNA polymerase beta' chain family. RpoC2 subfamily. In plastids the minimal PEP RNA polymerase catalytic core is composed of four subunits: alpha, beta, beta', and beta''. When a (nuclear-encoded) sigma factor is associated with the core the holoenzyme is formed, which can initiate transcription.

It is found in the plastid. The protein localises to the chloroplast. It catalyses the reaction RNA(n) + a ribonucleoside 5'-triphosphate = RNA(n+1) + diphosphate. In terms of biological role, DNA-dependent RNA polymerase catalyzes the transcription of DNA into RNA using the four ribonucleoside triphosphates as substrates. The sequence is that of DNA-directed RNA polymerase subunit beta'' from Psilotum nudum (Whisk fern).